Consider the following 328-residue polypeptide: Malate dehydrogenase (328 aa).

11–17 (GAAGQIG) is a binding site for NAD(+). Residues R94 and R100 each contribute to the substrate site. NAD(+)-binding positions include N107, Q114, and 131–133 (VGN). Substrate contacts are provided by N133 and R164. The Proton acceptor role is filled by H189.

It belongs to the LDH/MDH superfamily. MDH type 2 family.

The enzyme catalyses (S)-malate + NAD(+) = oxaloacetate + NADH + H(+). Catalyzes the reversible oxidation of malate to oxaloacetate. The polypeptide is Malate dehydrogenase (Xanthomonas campestris pv. campestris (strain B100)).